The following is a 410-amino-acid chain: Arginine deiminase (410 aa).

Cysteine 399 functions as the Amidino-cysteine intermediate in the catalytic mechanism.

This sequence belongs to the arginine deiminase family.

It localises to the cytoplasm. It catalyses the reaction L-arginine + H2O = L-citrulline + NH4(+). The protein operates within amino-acid degradation; L-arginine degradation via ADI pathway; carbamoyl phosphate from L-arginine: step 1/2. This Listeria monocytogenes serotype 4b (strain F2365) protein is Arginine deiminase.